The following is a 34-amino-acid chain: Mytilin-B (34 aa).

Intrachain disulfides connect Cys-2–Cys-27, Cys-6–Cys-29, Cys-10–Cys-31, and Cys-15–Cys-34.

It is found in the secreted. Functionally, has antibacterial and antiviral activity. In Mytilus edulis (Blue mussel), this protein is Mytilin-B.